The sequence spans 371 residues: uncharacterized protein (371 aa).

A coiled-coil region spans residues 287-323 (EVVTALDRYRQHLRETRERLEEKQGKLLEELKGYESM).

This is an uncharacterized protein from Aspergillus fumigatus (strain ATCC MYA-4609 / CBS 101355 / FGSC A1100 / Af293) (Neosartorya fumigata).